A 155-amino-acid chain; its full sequence is S-ribosylhomocysteine lyase (155 aa).

Residues His-57, His-61, and Cys-124 each contribute to the Fe cation site.

Belongs to the LuxS family. Homodimer. Requires Fe cation as cofactor.

It catalyses the reaction S-(5-deoxy-D-ribos-5-yl)-L-homocysteine = (S)-4,5-dihydroxypentane-2,3-dione + L-homocysteine. In terms of biological role, involved in the synthesis of autoinducer 2 (AI-2) which is secreted by bacteria and is used to communicate both the cell density and the metabolic potential of the environment. The regulation of gene expression in response to changes in cell density is called quorum sensing. Catalyzes the transformation of S-ribosylhomocysteine (RHC) to homocysteine (HC) and 4,5-dihydroxy-2,3-pentadione (DPD). The protein is S-ribosylhomocysteine lyase of Listeria monocytogenes serotype 4b (strain CLIP80459).